The following is a 355-amino-acid chain: RGG repeats nuclear RNA binding protein A (355 aa).

At Ala-2 the chain carries N-acetylalanine. The tract at residues 26-225 is disordered; it reads KIDKSKKSGQ…VEEKEPEDKE (200 aa). Positions 37 to 47 are enriched in low complexity; the sequence is SSLPAKSAPKL. 2 stretches are compositionally biased toward gly residues: residues 67–81 and 114–141; these read RGGG…GRGG and GGGA…SNEG. A Nuclear localization signal motif is present at residues 132–139; it reads GRRGGFSN. Residues 143 to 168 are compositionally biased toward basic and acidic residues; that stretch reads DGERPRRAFERRSGTGRGSDFKRDGS. Positions 145–155 match the Arginine-rich RNA-binding motif E-R-P-R-R-X-[F/Y]-[E/D]-R-R-S motif; the sequence is ERPRRAFERRS. Positions 177-190 are enriched in low complexity; the sequence is GEEIAAETEAVAGV. Basic and acidic residues-rich tracts occupy residues 191–202 and 209–225; these read ETEKDVGEKPAV and ANKE…EDKE. The region spanning 234–289 is the FF domain; it reads ILEEKKKALQSLTTSERKVDTKVFESMQQLSNKKSNDEIFIKLGSDKDKRKDDKEE. Ser-268 carries the phosphoserine modification. Residues 277–292 are compositionally biased toward basic and acidic residues; sequence GSDKDKRKDDKEEKAK. The segment at 277–355 is disordered; that stretch reads GSDKDKRKDD…AAQFPSLGGK (79 aa). Residues 323–333 are compositionally biased toward gly residues; that stretch reads GRGGVSSGESG. At Ser-351 the chain carries Phosphoserine.

This sequence belongs to the SERBP1-HABP4 family. In terms of tissue distribution, expressed in seedlings, leaves, roots, inflorescences, and siliques. Constitutively expressed in seedlings and roots.

The protein resides in the cytoplasm. Its subcellular location is the perinuclear region. It is found in the nucleus. Functionally, ribosome-binding protein that acts as a regulator of mRNA translation by promoting ribosome inactivation. Binds RNA. Regulates responses to abscisic acid (ABA). Promotes stomata closure in drought conditions. Involved in resistance to salt and drought stresses via the accumulation of Pro. The chain is RGG repeats nuclear RNA binding protein A from Arabidopsis thaliana (Mouse-ear cress).